Consider the following 337-residue polypeptide: tRNA N6-adenosine threonylcarbamoyltransferase (337 aa).

Residues histidine 111 and histidine 115 each coordinate Fe cation. Substrate is bound by residues 134–138, aspartate 167, glycine 180, and asparagine 272; that span reads LVSGG. Aspartate 300 is a binding site for Fe cation.

The protein belongs to the KAE1 / TsaD family. Fe(2+) serves as cofactor.

Its subcellular location is the cytoplasm. It catalyses the reaction L-threonylcarbamoyladenylate + adenosine(37) in tRNA = N(6)-L-threonylcarbamoyladenosine(37) in tRNA + AMP + H(+). Its function is as follows. Required for the formation of a threonylcarbamoyl group on adenosine at position 37 (t(6)A37) in tRNAs that read codons beginning with adenine. Is involved in the transfer of the threonylcarbamoyl moiety of threonylcarbamoyl-AMP (TC-AMP) to the N6 group of A37, together with TsaE and TsaB. TsaD likely plays a direct catalytic role in this reaction. The protein is tRNA N6-adenosine threonylcarbamoyltransferase of Salmonella newport (strain SL254).